A 642-amino-acid chain; its full sequence is Uromodulin (642 aa).

A signal peptide spans 1–24 (MGIPLTWMLLVMMVTSWFTLAEAS). Asn-25 and Asn-38 each carry an N-linked (GlcNAc...) asparagine glycan. Positions 28–64 (EARRCSECHNNATCTVDGVVTTCSCQTGFTGDGLVCE) constitute an EGF-like 1 domain. Intrachain disulfides connect Cys-32-Cys-41, Cys-35-Cys-50, Cys-52-Cys-63, Cys-69-Cys-82, Cys-77-Cys-91, Cys-93-Cys-105, Cys-111-Cys-125, Cys-119-Cys-134, Cys-136-Cys-147, Cys-149-Cys-160, Cys-154-Cys-171, Cys-175-Cys-268, Cys-196-Cys-283, Cys-218-Cys-256, Cys-224-Cys-288, Cys-249-Cys-257, Cys-298-Cys-307, Cys-301-Cys-316, Cys-318-Cys-348, Cys-336-Cys-426, and Cys-367-Cys-390. Positions 65 to 106 (DMDECATPWTHNCSNSSCVNTPGSFKCSCQDGFRLTPELSCT) constitute an EGF-like 2; calcium-binding domain. 2 N-linked (GlcNAc...) asparagine glycosylation sites follow: Asn-76 and Asn-79. Positions 107 to 148 (DVDECSEQGLSNCHALATCVNTEGDYLCVCPEGFTGDGWYCE) constitute an EGF-like 3; calcium-binding domain. The interval 149-172 (CSPGSCEPGLDCLPQGPDGKLVCQ) is beta hairpin. Residues 173 to 292 (DPCNTYETLT…CNLAYCTDPS (120 aa)) form a D10C region. The N-linked (GlcNAc...) asparagine glycan is linked to Asn-233. An N-linked (GlcNAc...) asparagine glycan is attached at Asn-276. The EGF-like 4 domain maps to 293 to 324 (SVEGTCEECRVDEDCISDNGRWRCQCKQDSNI). Asn-323 carries an N-linked (GlcNAc...) asparagine glycan. The ZP-N stretch occupies residues 335–430 (ECGANDIKMS…RMNFECSYPL (96 aa)). One can recognise a ZP domain in the interval 335–590 (ECGANDIKMS…PTCSGTRFRS (256 aa)). Asn-397 and Asn-448 each carry an N-linked (GlcNAc...) asparagine glycan. The tract at residues 431 to 454 (DMKVSLKTSLQPMVSALNISLGGT) is flexible ZP-N/ZP-C linker; important for secretion and polymerization into filaments. Residues 455–465 (GKFTVRMALFQ) are internal hydrophobic patch (IHP). The interval 455–590 (GKFTVRMALF…PTCSGTRFRS (136 aa)) is ZP-C. Disulfide bonds link Cys-507/Cys-567, Cys-528/Cys-583, and Cys-572/Cys-579. An N-linked (GlcNAc...) asparagine glycan is attached at Asn-514. Residues 587 to 590 (RFRS) are essential for cleavage by HPN. Residues 599–607 (VLNLGPITR) form an external hydrophobic patch (EHP); regulates polymerization into filaments region. Ala-618 is lipidated: GPI-anchor amidated alanine. The propeptide at 619 to 642 (SSNLRLLSIWLLLFPSATLIFMVQ) is removed in mature form.

As to quaternary structure, homodimer that then polymerizes into long filaments. The filaments can additionally assemble laterally to form a sheet. The filaments consist of a zigzag-shaped backbone with laterally protruding arms which interact with bacterial adhesin fimH. Two fimH molecules can bind to a single UMOD monomer. Post-translationally, N-glycosylated. In terms of processing, proteolytically cleaved at a conserved C-terminal proteolytic cleavage site to generate the secreted form found in urine. This cleavage is catalyzed by HPN. As to expression, detected in urine (secreted form). Detected in kidney thick ascending limb epithelial cells (at protein level).

It localises to the secreted. Its subcellular location is the apical cell membrane. The protein resides in the basolateral cell membrane. It is found in the cell projection. The protein localises to the cilium membrane. In terms of biological role, functions in biogenesis and organization of the apical membrane of epithelial cells of the thick ascending limb of Henle's loop (TALH), where it promotes formation of complex filamentous gel-like structure that may play a role in the water barrier permeability. May serve as a receptor for binding and endocytosis of cytokines (IL-1, IL-2) and TNF. Facilitates neutrophil migration across renal epithelia. In the urine, may contribute to colloid osmotic pressure, retards passage of positively charged electrolytes and inhibits formation of liquid containing supersaturated salts and subsequent formation of salt crystals. Protects against urinary tract infections by binding to type 1 fimbriated E.coli. Binds to the bacterial adhesin fimH which mediates the stable formation of bacterial aggregates, prevents the binding of E.coli to uroplakins UPK1A and UPK1B which act as urothelial receptors for type I fimbriae, and allows for pathogen clearance through micturation. Also promotes aggregation of other bacteria including K.pneumoniae, P.aeruginosa and S.mitis and so may also protect against other uropathogens. In Mus musculus (Mouse), this protein is Uromodulin (Umod).